The following is a 235-amino-acid chain: Ubiquinone/menaquinone biosynthesis C-methyltransferase UbiE (235 aa).

The S-adenosyl-L-methionine site is built by T59, D84, and S123.

Belongs to the class I-like SAM-binding methyltransferase superfamily. MenG/UbiE family.

It catalyses the reaction a 2-demethylmenaquinol + S-adenosyl-L-methionine = a menaquinol + S-adenosyl-L-homocysteine + H(+). The enzyme catalyses a 2-methoxy-6-(all-trans-polyprenyl)benzene-1,4-diol + S-adenosyl-L-methionine = a 5-methoxy-2-methyl-3-(all-trans-polyprenyl)benzene-1,4-diol + S-adenosyl-L-homocysteine + H(+). It functions in the pathway quinol/quinone metabolism; menaquinone biosynthesis; menaquinol from 1,4-dihydroxy-2-naphthoate: step 2/2. It participates in cofactor biosynthesis; ubiquinone biosynthesis. Functionally, methyltransferase required for the conversion of demethylmenaquinol (DMKH2) to menaquinol (MKH2) and the conversion of 2-polyprenyl-6-methoxy-1,4-benzoquinol (DDMQH2) to 2-polyprenyl-3-methyl-6-methoxy-1,4-benzoquinol (DMQH2). The polypeptide is Ubiquinone/menaquinone biosynthesis C-methyltransferase UbiE (Campylobacter jejuni subsp. jejuni serotype O:2 (strain ATCC 700819 / NCTC 11168)).